Here is a 202-residue protein sequence, read N- to C-terminus: UPF0301 protein ML0028 (202 aa).

This sequence belongs to the UPF0301 (AlgH) family.

The polypeptide is UPF0301 protein ML0028 (Mycobacterium leprae (strain TN)).